A 238-amino-acid polypeptide reads, in one-letter code: tRNA (guanine-N(7)-)-methyltransferase (238 aa).

S-adenosyl-L-methionine-binding residues include Glu-68, Glu-93, Asp-120, and Asp-143. Asp-143 is an active-site residue. Residues Lys-147, Asp-179, and 216-219 (TKFE) contribute to the substrate site.

Belongs to the class I-like SAM-binding methyltransferase superfamily. TrmB family.

The enzyme catalyses guanosine(46) in tRNA + S-adenosyl-L-methionine = N(7)-methylguanosine(46) in tRNA + S-adenosyl-L-homocysteine. It participates in tRNA modification; N(7)-methylguanine-tRNA biosynthesis. In terms of biological role, catalyzes the formation of N(7)-methylguanine at position 46 (m7G46) in tRNA. The protein is tRNA (guanine-N(7)-)-methyltransferase of Shewanella baltica (strain OS195).